The primary structure comprises 240 residues: Dihydromonapterin reductase (240 aa).

The Proton acceptor role is filled by Y152.

This sequence belongs to the short-chain dehydrogenases/reductases (SDR) family. FolM subfamily.

It carries out the reaction (6S)-5,6,7,8-tetrahydrofolate + NADP(+) = 7,8-dihydrofolate + NADPH + H(+). The enzyme catalyses 7,8-dihydromonapterin + NADPH + H(+) = 5,6,7,8-tetrahydromonapterin + NADP(+). Its function is as follows. Catalyzes the reduction of dihydromonapterin to tetrahydromonapterin. Also has lower activity with dihydrofolate. In Escherichia coli O1:K1 / APEC, this protein is Dihydromonapterin reductase (folM).